Consider the following 513-residue polypeptide: ATP synthase subunit alpha (513 aa).

169 to 176 contributes to the ATP binding site; sequence GDRQTGKT.

The protein belongs to the ATPase alpha/beta chains family. F-type ATPases have 2 components, CF(1) - the catalytic core - and CF(0) - the membrane proton channel. CF(1) has five subunits: alpha(3), beta(3), gamma(1), delta(1), epsilon(1). CF(0) has three main subunits: a(1), b(2) and c(9-12). The alpha and beta chains form an alternating ring which encloses part of the gamma chain. CF(1) is attached to CF(0) by a central stalk formed by the gamma and epsilon chains, while a peripheral stalk is formed by the delta and b chains.

The protein localises to the cell inner membrane. The catalysed reaction is ATP + H2O + 4 H(+)(in) = ADP + phosphate + 5 H(+)(out). In terms of biological role, produces ATP from ADP in the presence of a proton gradient across the membrane. The alpha chain is a regulatory subunit. The sequence is that of ATP synthase subunit alpha from Edwardsiella ictaluri (strain 93-146).